The chain runs to 597 residues: mRNA-capping enzyme (597 aa).

The TPase stretch occupies residues 1–212 (MAYNKIPPRW…DEDGKKDSEP (212 aa)). One can recognise a Tyrosine-protein phosphatase domain in the interval 25–183 (LPLKTMLGPR…FRRYGDIEEA (159 aa)). Cysteine 126 (phosphocysteine intermediate) is an active-site residue. A disordered region spans residues 181-221 (EEAPPPPVLPDWCFEDEDEEDEDEDGKKDSEPGSSASFSKR). Positions 193 to 204 (CFEDEDEEDEDE) are enriched in acidic residues. The segment at 229–597 (GAIFLEGITV…PPPKRLHRPT (369 aa)) is GTase. Lysine 294 (N6-GMP-lysine intermediate) is an active-site residue. Residues arginine 299, arginine 315, 343 to 345 (DGE), 458 to 460 (KWK), and 528 to 533 (RQRIDK) each bind GTP. Residues 330–386 (RKDLRMHLSNTLLDGEMIIDKVNGQAVPRYLIYDIIKFNAQPVGDCDFNIRLQCIER) form an interaction with POLR2A region. The segment at 573 to 597 (KRKYPLDPDTELMPPPPPKRLHRPT) is disordered.

This sequence in the N-terminal section; belongs to the non-receptor class of the protein-tyrosine phosphatase family. It in the C-terminal section; belongs to the eukaryotic GTase family. In terms of assembly, interacts with SUPT5H and RNMT. Interacts with POLR2A (via C-terminus); this enhances guanylyltransferase activity. Binds (via GTase domain) to the elongating phosphorylated form of RNA polymerase II; can form direct interactions with the phosphorylated POLR2A C-terminal domain and indirect interactions via bound RNA.

The protein localises to the nucleus. It catalyses the reaction a 5'-end triphospho-ribonucleoside in mRNA + H2O = a 5'-end diphospho-ribonucleoside in mRNA + phosphate + H(+). It carries out the reaction a 5'-end diphospho-ribonucleoside in mRNA + GTP + H(+) = a 5'-end (5'-triphosphoguanosine)-ribonucleoside in mRNA + diphosphate. Its activity is regulated as follows. RNA triphosphatase activity is inhibited by vanadate, iodoacetate and magnesium. Functionally, bifunctional mRNA-capping enzyme exhibiting RNA 5'-triphosphate monophosphatase activity in the N-terminal part and mRNA guanylyltransferase activity in the C-terminal part. Catalyzes the first two steps of cap formation: by removing the gamma-phosphate from the 5'-triphosphate end of nascent mRNA to yield a diphosphate end, and by transferring the GMP moiety of GTP to the 5'-diphosphate terminus of RNA via a covalent enzyme-GMP reaction intermediate. The polypeptide is mRNA-capping enzyme (Rngtt) (Mus musculus (Mouse)).